Consider the following 376-residue polypeptide: Dehydrogenase/reductase SDR family member FEY (376 aa).

Position 2 is an N-acetylserine (Ser-2). NAD(+) is bound at residue 61 to 85; that stretch reads VVTGSTSGIGRETARQLAEAGAHVV. Ser-199 lines the substrate pocket. The active-site Proton acceptor is Tyr-227.

Belongs to the short-chain dehydrogenases/reductases (SDR) family. As to expression, expressed in roots, stems, leaves and flowers and, at lower levels, in siliques.

Putative oxidoreductase. Required for vegetative shoot apex development, especially during leaf positioning and for shoot apical meristem (SAM) maintenance. This chain is Dehydrogenase/reductase SDR family member FEY, found in Arabidopsis thaliana (Mouse-ear cress).